The chain runs to 337 residues: tRNA N6-adenosine threonylcarbamoyltransferase (337 aa).

His-111 and His-115 together coordinate Fe cation. Substrate contacts are provided by residues 134 to 138, Asp-167, Gly-180, and Asn-272; that span reads LVSGG. Asp-300 provides a ligand contact to Fe cation.

Belongs to the KAE1 / TsaD family. Requires Fe(2+) as cofactor.

Its subcellular location is the cytoplasm. The enzyme catalyses L-threonylcarbamoyladenylate + adenosine(37) in tRNA = N(6)-L-threonylcarbamoyladenosine(37) in tRNA + AMP + H(+). Its function is as follows. Required for the formation of a threonylcarbamoyl group on adenosine at position 37 (t(6)A37) in tRNAs that read codons beginning with adenine. Is involved in the transfer of the threonylcarbamoyl moiety of threonylcarbamoyl-AMP (TC-AMP) to the N6 group of A37, together with TsaE and TsaB. TsaD likely plays a direct catalytic role in this reaction. This is tRNA N6-adenosine threonylcarbamoyltransferase from Shewanella loihica (strain ATCC BAA-1088 / PV-4).